A 253-amino-acid polypeptide reads, in one-letter code: Acidic 26 kDa endochitinase (253 aa).

A signal peptide spans 1–24; the sequence is MKFNIVSPVALSCLFFLFLTGTLA. The Proton donor role is filled by E92. A disulfide bridge links C212 with C244.

It belongs to the glycosyl hydrolase 19 family. Chitinase class II subfamily.

Its subcellular location is the secreted. It localises to the extracellular space. It carries out the reaction Random endo-hydrolysis of N-acetyl-beta-D-glucosaminide (1-&gt;4)-beta-linkages in chitin and chitodextrins.. In terms of biological role, defense against chitin-containing fungal pathogens. The protein is Acidic 26 kDa endochitinase (CHI3) of Solanum lycopersicum (Tomato).